Consider the following 175-residue polypeptide: Crossover junction endodeoxyribonuclease RuvC (175 aa).

Active-site residues include D11, E71, and H143. Residues D11, E71, and H143 each contribute to the Mg(2+) site.

Belongs to the RuvC family. In terms of assembly, homodimer which binds Holliday junction (HJ) DNA. The HJ becomes 2-fold symmetrical on binding to RuvC with unstacked arms; it has a different conformation from HJ DNA in complex with RuvA. In the full resolvosome a probable DNA-RuvA(4)-RuvB(12)-RuvC(2) complex forms which resolves the HJ. It depends on Mg(2+) as a cofactor.

The protein resides in the cytoplasm. The enzyme catalyses Endonucleolytic cleavage at a junction such as a reciprocal single-stranded crossover between two homologous DNA duplexes (Holliday junction).. Functionally, the RuvA-RuvB-RuvC complex processes Holliday junction (HJ) DNA during genetic recombination and DNA repair. Endonuclease that resolves HJ intermediates. Cleaves cruciform DNA by making single-stranded nicks across the HJ at symmetrical positions within the homologous arms, yielding a 5'-phosphate and a 3'-hydroxyl group; requires a central core of homology in the junction. The consensus cleavage sequence is 5'-(A/T)TT(C/G)-3'. Cleavage occurs on the 3'-side of the TT dinucleotide at the point of strand exchange. HJ branch migration catalyzed by RuvA-RuvB allows RuvC to scan DNA until it finds its consensus sequence, where it cleaves and resolves the cruciform DNA. This chain is Crossover junction endodeoxyribonuclease RuvC, found in Parvibaculum lavamentivorans (strain DS-1 / DSM 13023 / NCIMB 13966).